We begin with the raw amino-acid sequence, 84 residues long: MAYQKIVFVALMLVLAVSAMRLPDQQDQDISVAKRVACKCDDDGPDIRSATLTGTVDLGSCNEGWEKCASYYTVVADCCRRPRS.

Residues methionine 1–alanine 19 form the signal peptide. Positions methionine 20–alanine 33 are excised as a propeptide. 3 disulfide bridges follow: cysteine 38-cysteine 78, cysteine 40-cysteine 68, and cysteine 61-cysteine 79.

This sequence belongs to the sea anemone sodium channel inhibitory toxin family. Type II subfamily.

The protein resides in the secreted. The protein localises to the nematocyst. In terms of biological role, binds specifically to the voltage-gated sodium channel (Nav) and delays its inactivation. The chain is Delta-thalatoxin-Hhe1a from Heterodactyla hemprichii (Hemprich's sea anemone).